The following is a 526-amino-acid chain: Arginine/ornithine antiporter ArcD1 (526 aa).

14 helical membrane passes run 8-28, 41-61, 88-108, 128-148, 160-180, 220-240, 255-275, 297-317, 354-374, 378-398, 407-427, 428-448, 466-486, and 495-515; these read GIGL…GGVF, GGVV…VLSL, FISG…FAVL, LTIL…LLVM, IVLV…IVTF, VKGS…AAMM, IFGL…PFGF, VGGW…LGAW, LLLT…VADA, FVYL…LYLF, TSNI…LYYS, GWQF…LYAL, FILT…WLGL, and NTLL…YFVV.

It belongs to the amino acid-polyamine-organocation (APC) superfamily. Basic amino acid/polyamine antiporter (APA) (TC 2.A.3.2) family.

The protein localises to the cell membrane. The enzyme catalyses L-ornithine(in) + L-arginine(out) = L-ornithine(out) + L-arginine(in). Its function is as follows. Catalyzes electroneutral exchange between L-arginine and L-ornithine. Can also efficiently translocate L-histidine and L-lysine. ArcD1 is the main L-arginine/L-ornithine exchanger in the arginine deiminase (ADI) pathway. The chain is Arginine/ornithine antiporter ArcD1 from Lactococcus lactis subsp. cremoris (strain MG1363).